Consider the following 141-residue polypeptide: Cytochrome c-type biogenesis protein CcmE (141 aa).

The Cytoplasmic portion of the chain corresponds to 1–7 (MQRKHKR). Residues 8 to 28 (ILFVAVSFIALGCVSAFVLFE) traverse the membrane as a helical; Signal-anchor for type II membrane protein segment. The Periplasmic segment spans residues 29 to 141 (LSKSISFFCT…SSDAAVIGSS (113 aa)). Heme-binding residues include His-121 and Tyr-125.

This sequence belongs to the CcmE/CycJ family.

Its subcellular location is the cell inner membrane. Functionally, heme chaperone required for the biogenesis of c-type cytochromes. Transiently binds heme delivered by CcmC and transfers the heme to apo-cytochromes in a process facilitated by CcmF and CcmH. The protein is Cytochrome c-type biogenesis protein CcmE of Anaplasma phagocytophilum (strain HZ).